The primary structure comprises 227 residues: H-2 class II histocompatibility antigen, A-U alpha chain (227 aa).

Positions Asp-1–Asn-82 are alpha-1. Residues Asp-1–Glu-189 lie on the Extracellular side of the membrane. The interval Glu-83–Trp-176 is alpha-2. Positions Pro-85–Glu-177 constitute an Ig-like C1-type domain. Cys-105 and Cys-161 are joined by a disulfide. Residue Asn-116 is glycosylated (N-linked (GlcNAc...) asparagine). The connecting peptide stretch occupies residues Glu-177–Glu-189. The chain crosses the membrane as a helical span at residues Thr-190–Leu-215. The Cytoplasmic segment spans residues Arg-216–Leu-227.

It belongs to the MHC class II family.

It is found in the membrane. This chain is H-2 class II histocompatibility antigen, A-U alpha chain (H2-Aa), found in Mus musculus (Mouse).